The following is a 101-amino-acid chain: STAS-domain containing protein PA14_20770 (101 aa).

Residues 14-101 (LTIQIQGRFD…SNFEQLFKIS (88 aa)) form the STAS domain.

Post-translationally, phosphorylated on a serine residue, possibly on Ser-56.

It is found in the secreted. The sequence is that of STAS-domain containing protein PA14_20770 from Pseudomonas aeruginosa (strain UCBPP-PA14).